The following is a 428-amino-acid chain: Enolase (428 aa).

Gln163 contributes to the (2R)-2-phosphoglycerate binding site. Glu205 functions as the Proton donor in the catalytic mechanism. Positions 242, 286, and 313 each coordinate Mg(2+). 4 residues coordinate (2R)-2-phosphoglycerate: Lys338, Arg367, Ser368, and Lys389. Lys338 serves as the catalytic Proton acceptor.

Belongs to the enolase family. Mg(2+) serves as cofactor.

It localises to the cytoplasm. The protein resides in the secreted. It is found in the cell surface. The enzyme catalyses (2R)-2-phosphoglycerate = phosphoenolpyruvate + H2O. The protein operates within carbohydrate degradation; glycolysis; pyruvate from D-glyceraldehyde 3-phosphate: step 4/5. Functionally, catalyzes the reversible conversion of 2-phosphoglycerate (2-PG) into phosphoenolpyruvate (PEP). It is essential for the degradation of carbohydrates via glycolysis. In Syntrophus aciditrophicus (strain SB), this protein is Enolase.